The following is a 183-amino-acid chain: uncharacterized protein (183 aa).

The segment at 1–36 (MAKRGNKKKQEAPLSLGKHTVGGRVGKPTNAKTGSA) is disordered. The RRM domain occupies 100-174 (TNVVIENLAP…FKLSCYIKKN (75 aa)).

It localises to the nucleus. The protein resides in the nucleolus. This is an uncharacterized protein from Schizosaccharomyces pombe (strain 972 / ATCC 24843) (Fission yeast).